Consider the following 310-residue polypeptide: 4-hydroxyproline 2-epimerase (310 aa).

The active-site Proton acceptor is the Cys88. Residues 89–90, His208, and Asp232 each bind substrate; that span reads GH. Cys236 functions as the Proton donor in the catalytic mechanism. A substrate-binding site is contributed by 237–238; it reads GT.

The protein belongs to the proline racemase family.

The enzyme catalyses trans-4-hydroxy-L-proline = cis-4-hydroxy-D-proline. Functionally, catalyzes the epimerization of trans-4-hydroxy-L-proline (t4LHyp) to cis-4-hydroxy-D-proline (c4DHyp). Is likely involved in a degradation pathway that converts t4LHyp to alpha-ketoglutarate. Displays no proline racemase activity. This Acinetobacter baumannii (strain ATCC 17978 / DSM 105126 / CIP 53.77 / LMG 1025 / NCDC KC755 / 5377) protein is 4-hydroxyproline 2-epimerase.